The sequence spans 147 residues: D-aminoacyl-tRNA deacylase (147 aa).

A Gly-cisPro motif, important for rejection of L-amino acids motif is present at residues 137 to 138 (GP).

The protein belongs to the DTD family. In terms of assembly, homodimer.

It is found in the cytoplasm. It carries out the reaction glycyl-tRNA(Ala) + H2O = tRNA(Ala) + glycine + H(+). It catalyses the reaction a D-aminoacyl-tRNA + H2O = a tRNA + a D-alpha-amino acid + H(+). Its function is as follows. An aminoacyl-tRNA editing enzyme that deacylates mischarged D-aminoacyl-tRNAs. Also deacylates mischarged glycyl-tRNA(Ala), protecting cells against glycine mischarging by AlaRS. Acts via tRNA-based rather than protein-based catalysis; rejects L-amino acids rather than detecting D-amino acids in the active site. By recycling D-aminoacyl-tRNA to D-amino acids and free tRNA molecules, this enzyme counteracts the toxicity associated with the formation of D-aminoacyl-tRNA entities in vivo and helps enforce protein L-homochirality. This Acinetobacter baumannii (strain ATCC 17978 / DSM 105126 / CIP 53.77 / LMG 1025 / NCDC KC755 / 5377) protein is D-aminoacyl-tRNA deacylase.